We begin with the raw amino-acid sequence, 364 residues long: Dual-specificity RNA methyltransferase RlmN (364 aa).

E91 acts as the Proton acceptor in catalysis. The 237-residue stretch at 97–333 folds into the Radical SAM core domain; it reads ESDRGTLCIS…VTVRKTRGDD (237 aa). The cysteines at positions 104 and 338 are disulfide-linked. Positions 111, 115, and 118 each coordinate [4Fe-4S] cluster. Residues 164 to 165, S196, 218 to 220, and N295 contribute to the S-adenosyl-L-methionine site; these read GE and SLH. C338 serves as the catalytic S-methylcysteine intermediate.

This sequence belongs to the radical SAM superfamily. RlmN family. [4Fe-4S] cluster is required as a cofactor.

The protein resides in the cytoplasm. The catalysed reaction is adenosine(2503) in 23S rRNA + 2 reduced [2Fe-2S]-[ferredoxin] + 2 S-adenosyl-L-methionine = 2-methyladenosine(2503) in 23S rRNA + 5'-deoxyadenosine + L-methionine + 2 oxidized [2Fe-2S]-[ferredoxin] + S-adenosyl-L-homocysteine. It carries out the reaction adenosine(37) in tRNA + 2 reduced [2Fe-2S]-[ferredoxin] + 2 S-adenosyl-L-methionine = 2-methyladenosine(37) in tRNA + 5'-deoxyadenosine + L-methionine + 2 oxidized [2Fe-2S]-[ferredoxin] + S-adenosyl-L-homocysteine. Its function is as follows. Specifically methylates position 2 of adenine 2503 in 23S rRNA and position 2 of adenine 37 in tRNAs. m2A2503 modification seems to play a crucial role in the proofreading step occurring at the peptidyl transferase center and thus would serve to optimize ribosomal fidelity. This chain is Dual-specificity RNA methyltransferase RlmN, found in Neisseria gonorrhoeae (strain ATCC 700825 / FA 1090).